A 343-amino-acid chain; its full sequence is Vancomycin C-type resistance protein VanC1 (343 aa).

In terms of domain architecture, ATP-grasp spans 134-336 (HQLADTMGIA…YEILVEQLIA (203 aa)). Residue 164–219 (IQDHGFPIFIKPNEAGSSKGITKVTDKTALQSALTTAFAYGSTVLIQKAIAGIEIG) coordinates ATP. Asp290, Glu303, and Asn305 together coordinate Mg(2+). The Mn(2+) site is built by Asp290, Glu303, and Asn305.

It belongs to the D-alanine--D-alanine ligase family. Requires Mg(2+) as cofactor. It depends on Mn(2+) as a cofactor.

The protein resides in the cell membrane. The enzyme catalyses D-serine + D-alanine + ATP = D-alanyl-D-serine + ADP + phosphate + H(+). Functionally, D-alanine--D-alanine ligase of altered specificity, which catalyzes synthesis of D-Ala-D-Ser; produces a peptidoglycan which does not terminate in D-alanine but in D-serine, thus probably reducing affinity for vancomycin. Together with VanT and VanXYC, required for vancomycin resistance in E.gallinarum strain BM4174. The chain is Vancomycin C-type resistance protein VanC1 from Enterococcus gallinarum.